A 1054-amino-acid polypeptide reads, in one-letter code: Trehalose synthase complex regulatory subunit TPS3 (1054 aa).

The tract at residues 112–133 (AANSGIPPANNPVSSGSTAQRP) is disordered. Over residues 122–132 (NPVSSGSTAQR) the composition is skewed to polar residues. 3 positions are modified to phosphoserine: serine 148, serine 150, and serine 181. Disordered stretches follow at residues 155 to 203 (ASSI…PVSK) and 223 to 250 (QQQA…SSSN). A compositionally biased stretch (polar residues) spans 170–182 (LSSSLMKNPNLSF). Residues 235-249 (SGSTAGDSSIASSSS) show a composition bias toward low complexity. Threonine 265 carries the phosphothreonine modification. Phosphoserine occurs at positions 267 and 273. Residues 287–778 (KFGGYSNNAK…SNQETSTVFN (492 aa)) are glycosyltransferase. The residue at position 960 (serine 960) is a Phosphoserine.

It in the N-terminal section; belongs to the glycosyltransferase 20 family. The trehalose synthase complex is composed of the two catalytic subunits TPS1 and TPS2 and at least one of the two regulatory subunits TPS3 or TSL1.

The protein resides in the cytoplasm. Its function is as follows. Regulatory subunit of the trehalose synthase complex that catalyzes the production of trehalose from glucose-6-phosphate and UDP-glucose in a two step process. May stabilize the trehalose synthase complex. This chain is Trehalose synthase complex regulatory subunit TPS3 (TPS3), found in Saccharomyces cerevisiae (strain ATCC 204508 / S288c) (Baker's yeast).